The primary structure comprises 127 residues: Ribonuclease VapC9 (127 aa).

The PINc domain occupies 2 to 115 (IVVDASAALA…VTADLRLSDT (114 aa)). Aspartate 5 and aspartate 91 together coordinate Mg(2+).

The protein belongs to the PINc/VapC protein family. Requires Mg(2+) as cofactor.

Functionally, toxic component of a type II toxin-antitoxin (TA) system. An RNase. The cognate antitoxin is VapB9. The protein is Ribonuclease VapC9 of Mycobacterium tuberculosis (strain CDC 1551 / Oshkosh).